The primary structure comprises 368 residues: Methylthioribose-1-phosphate isomerase (368 aa).

Substrate-binding positions include 54–56, Arg-91, and Gln-204; that span reads RGA. The Proton donor role is filled by Asp-245. 255–256 is a substrate binding site; sequence NK.

It belongs to the eIF-2B alpha/beta/delta subunits family. MtnA subfamily.

It carries out the reaction 5-(methylsulfanyl)-alpha-D-ribose 1-phosphate = 5-(methylsulfanyl)-D-ribulose 1-phosphate. The protein operates within amino-acid biosynthesis; L-methionine biosynthesis via salvage pathway; L-methionine from S-methyl-5-thio-alpha-D-ribose 1-phosphate: step 1/6. Its function is as follows. Catalyzes the interconversion of methylthioribose-1-phosphate (MTR-1-P) into methylthioribulose-1-phosphate (MTRu-1-P). This chain is Methylthioribose-1-phosphate isomerase, found in Gluconobacter oxydans (strain 621H) (Gluconobacter suboxydans).